The primary structure comprises 393 residues: Bifunctional chrysanthemol synthase, chloroplastic (393 aa).

Residues 1–18 (MACSSSLSSKWASWGASS) show a composition bias toward low complexity. The interval 1 to 22 (MACSSSLSSKWASWGASSRPHP) is disordered. The N-terminal 53 residues, 1-53 (MACSSSLSSKWASWGASSRPHPSVQPFVTRKNVVRYHKPTSELSYSPLTTTLS), are a transit peptide targeting the chloroplast. Dimethylallyl diphosphate-binding residues include K99, R102, and Q137. Positions 144 and 148 each coordinate Mg(2+). Dimethylallyl diphosphate contacts are provided by R153, R154, K241, Q280, D287, K297, and K306.

Belongs to the FPP/GGPP synthase family. Mg(2+) is required as a cofactor. Restricted to glandular trichomes during achene maturation. Expressed in flowers and in both ray and disk florets.

The protein resides in the plastid. It is found in the chloroplast. The catalysed reaction is 2 dimethylallyl diphosphate = (R,R)-chrysanthemyl diphosphate + diphosphate. It carries out the reaction (R,R)-chrysanthemyl diphosphate + H2O = (R,R)-chrysanthemol + diphosphate. It catalyses the reaction (R)-lavandulyl diphosphate + H2O = (R)-lavandulol + diphosphate. Its pathway is isoprenoid biosynthesis. Component of the monoterpenoid pyrethrins biosynthesis; pyrethrins are widely used plant-derived pesticide. Catalyzes the condensation of two molecules of dimethylallyl diphosphate to produce chrysanthemyl diphosphate (CPP), a monoterpene with a non-head-to-tail or irregular c1'-2-3 linkage between isoprenoid units. In a second step, hydrolyzes the diphosphate moiety of CPP to form chrysanthemol. With a lower efficiency, can also converts dimethylallyl diphosphate into lavandulyl diphosphate (LPP), and subsequently LPP into lavandulol. The protein is Bifunctional chrysanthemol synthase, chloroplastic of Tanacetum cinerariifolium (Dalmatian daisy).